The following is a 295-amino-acid chain: Dehydrodolichyl diphosphate synthase 6 (295 aa).

It belongs to the UPP synthase family. It depends on Mg(2+) as a cofactor.

It participates in protein modification; protein glycosylation. Functionally, catalyzes cis-prenyl chain elongation to produce the polyprenyl backbone of dolichol, a glycosyl carrier-lipid required for the biosynthesis of several classes of glycoprotein. The polypeptide is Dehydrodolichyl diphosphate synthase 6 (Arabidopsis thaliana (Mouse-ear cress)).